A 201-amino-acid polypeptide reads, in one-letter code: 3-isopropylmalate dehydratase small subunit (201 aa).

It belongs to the LeuD family. LeuD type 1 subfamily. Heterodimer of LeuC and LeuD.

The catalysed reaction is (2R,3S)-3-isopropylmalate = (2S)-2-isopropylmalate. The protein operates within amino-acid biosynthesis; L-leucine biosynthesis; L-leucine from 3-methyl-2-oxobutanoate: step 2/4. Its function is as follows. Catalyzes the isomerization between 2-isopropylmalate and 3-isopropylmalate, via the formation of 2-isopropylmaleate. This Shewanella sp. (strain MR-7) protein is 3-isopropylmalate dehydratase small subunit.